We begin with the raw amino-acid sequence, 177 residues long: Centromere protein R (177 aa).

Lysine 8 participates in a covalent cross-link: Glycyl lysine isopeptide (Lys-Gly) (interchain with G-Cter in SUMO2). The LXXLL motif signature appears at 9 to 13 (LDGLL). Serine 17 carries the phosphoserine modification. The segment at 20-50 (PSKITRKKSVITYSPTTGTCQMSLFASPTSS) is DD1. Lysine 22 is covalently cross-linked (Glycyl lysine isopeptide (Lys-Gly) (interchain with G-Cter in SUMO2)). Residue serine 28 is modified to Phosphoserine. Residues 41–50 (MSLFASPTSS) show a composition bias toward polar residues. Residues 41-81 (MSLFASPTSSEEQKHRNGLSNEKRKKLNHPSLTESKESTTK) are disordered. Positions 63–66 (KRKK) match the Nuclear localization signal motif. Serine 71 bears the Phosphoserine mark. The stretch at 83–113 (NDEFMMLLSKVEKLSEEIMEIMQNLSSIQAL) forms a coiled coil. An LXXIL motif motif is present at residues 172–176 (LKAIL).

As to quaternary structure, homodimer; mediated by the coiled coil domain. Isoform 3, but not other isoforms, interacts with the cytoplasmic tail of integrin ITGB3. The relevance of the interaction with ITGB3 is however uncertain, since isoform 3 is mainly nuclear. Interacts with CCNA2 and MTA1. Interacts with NFKB1 NF-kappa-B subunit. Component of the CENPA-CAD complex, composed of CENPI, CENPK, CENPL, CENPO, CENPP, CENPQ, CENPR and CENPS. The CENPA-CAD complex interacts with the CENPA-NAC complex, at least composed of CENPA, CENPC, CENPH, CENPM, CENPN, CENPT and CENPU. Interacts with TASOR. In terms of tissue distribution, widely expressed. Expressed in spleen, thymus, prostate, ovary, small intestine and white blood cells. Highly expressed in testis and colon. Isoform 4 is expressed in platelets, lymphocytes and granulocytes.

The protein resides in the nucleus. The protein localises to the chromosome. Its subcellular location is the centromere. It localises to the kinetochore. It is found in the cytoplasm. Transcription coregulator that can have both coactivator and corepressor functions. Isoform 1, but not other isoforms, is involved in the coactivation of nuclear receptors for retinoid X (RXRs) and thyroid hormone (TRs) in a ligand-dependent fashion. In contrast, it does not coactivate nuclear receptors for retinoic acid, vitamin D, progesterone receptor, nor glucocorticoid. Acts as a coactivator for estrogen receptor alpha. Acts as a transcriptional corepressor via its interaction with the NFKB1 NF-kappa-B subunit, possibly by interfering with the transactivation domain of NFKB1. Induces apoptosis in breast cancer cells, but not in other cancer cells, via a caspase-2 mediated pathway that involves mitochondrial membrane permeabilization but does not require other caspases. May also act as an inhibitor of cyclin A-associated kinase. Also acts a component of the CENPA-CAD (nucleosome distal) complex, a complex recruited to centromeres which is involved in assembly of kinetochore proteins, mitotic progression and chromosome segregation. May be involved in incorporation of newly synthesized CENPA into centromeres via its interaction with the CENPA-NAC complex. This Homo sapiens (Human) protein is Centromere protein R (ITGB3BP).